Reading from the N-terminus, the 402-residue chain is Flavohemoprotein (402 aa).

The Globin domain occupies 1–138 (MLSPEVRALV…LADLLIGRER (138 aa)). His85 provides a ligand contact to heme b. Active-site charge relay system residues include Tyr95 and Glu137. Residues 149–402 (GGWTGWRAFK…AEVFGTGGVA (254 aa)) form a reductase region. The FAD-binding FR-type domain maps to 152 to 261 (TGWRAFKVVR…SPPQGDFTLD (110 aa)). FAD is bound by residues Tyr190 and 206-209 (RQYS). Residue 274-279 (GVGLTP) participates in NADP(+) binding. 395–398 (VFGT) contacts FAD.

The protein belongs to the globin family. Two-domain flavohemoproteins subfamily. This sequence in the C-terminal section; belongs to the flavoprotein pyridine nucleotide cytochrome reductase family. Heme b is required as a cofactor. FAD serves as cofactor.

The enzyme catalyses 2 nitric oxide + NADPH + 2 O2 = 2 nitrate + NADP(+) + H(+). The catalysed reaction is 2 nitric oxide + NADH + 2 O2 = 2 nitrate + NAD(+) + H(+). Is involved in NO detoxification in an aerobic process, termed nitric oxide dioxygenase (NOD) reaction that utilizes O(2) and NAD(P)H to convert NO to nitrate, which protects the bacterium from various noxious nitrogen compounds. Therefore, plays a central role in the inducible response to nitrosative stress. This chain is Flavohemoprotein, found in Bordetella pertussis (strain Tohama I / ATCC BAA-589 / NCTC 13251).